A 427-amino-acid chain; its full sequence is MSQTDMNVFEQLESEVRSYCRSFPTVFTKAKGYKMWDEAGKEYIDFFSGAGALNYGHNDEKMKKALVDYIMDDGITHSLDMATTPKGKFLQKFHDVILKPRNLDYKVMFPGPTGTNTVESALKLARKVTGRTDIISFTNGFHGMTIGSLSVTGNSFKRKGAGIPLTNVVTMPYDNFVSESLDTLDYLERFLEDGGSGVEIPAAMILETVQGEGGINAARTEWLQRVEKICKRWGILLIIDDVQAGVGRTGTFFSFEDAGITPDIVCLSKSIGGFGLPLAITLFRPELDIWAPGEHNGTFRGNNHAFVTATEALSYWEDDSFEKDIQEKSATISDFLVKLVTEYPEIKGEVKGKGFMVGIASDVEGFASKVTEEAFSRGLIMETSGPNDEVFKLFPPLTIDDEGLEKGLAIIEESIKALVETKELVMQ.

An N6-(pyridoxal phosphate)lysine modification is found at Lys-269.

It belongs to the class-III pyridoxal-phosphate-dependent aminotransferase family. The cofactor is pyridoxal 5'-phosphate.

The catalysed reaction is L-2,4-diaminobutanoate + 2-oxoglutarate = L-aspartate 4-semialdehyde + L-glutamate. It participates in amine and polyamine biosynthesis; ectoine biosynthesis; L-ectoine from L-aspartate 4-semialdehyde: step 1/3. Functionally, catalyzes reversively the conversion of L-aspartate beta-semialdehyde (ASA) to L-2,4-diaminobutyrate (DABA) by transamination with L-glutamate. This is Diaminobutyrate--2-oxoglutarate transaminase (ectB) from Halalkalibacterium halodurans (strain ATCC BAA-125 / DSM 18197 / FERM 7344 / JCM 9153 / C-125) (Bacillus halodurans).